The sequence spans 218 residues: Ras-related protein Rab-27B (218 aa).

T2 is subject to N-acetylthreonine. Position 16–24 (16–24 (GDSGVGKTT)) interacts with GTP. The Effector region signature appears at 38 to 46 (FITTVGIDF). Residues 74 to 78 (DTAGQ), 133 to 136 (NKAD), and 163 to 165 (SAA) each bind GTP. C123 and C188 form a disulfide bridge. Residues 194-218 (IPDTVNGGNSGNLDGEKPPEKKCIC) are disordered. Residues 207 to 218 (DGEKPPEKKCIC) show a composition bias toward basic and acidic residues. 2 S-geranylgeranyl cysteine lipidation sites follow: C216 and C218. Cysteine methyl ester is present on C218.

The protein belongs to the small GTPase superfamily. Rab family. As to quaternary structure, interacts with SYTL2, SYTL4, MYRIP and MLPH. Interacts with RPH3A and RPH3A. Interacts (GDP-bound form preferentially) with DENND10. Expressed primarily in testis.

The protein resides in the membrane. It is found in the late endosome. The catalysed reaction is GTP + H2O = GDP + phosphate + H(+). With respect to regulation, regulated by guanine nucleotide exchange factors (GEFs) which promote the exchange of bound GDP for free GTP, GTPase activating proteins (GAPs) which increase the GTP hydrolysis activity, and GDP dissociation inhibitors which inhibit the dissociation of the nucleotide from the GTPase. Activated by GEFs such as DENND10. Functionally, small GTPase which cycles between active GTP-bound and inactive GDP-bound states. In its active state, binds to a variety of effector proteins to regulate homeostasis of late endocytic pathway, including endosomal positioning, maturation and secretion. Plays a role in NTRK2/TRKB axonal anterograde transport by facilitating the association of NTRK2/TRKB with KLC1. May be involved in targeting uroplakins to urothelial apical membranes. The polypeptide is Ras-related protein Rab-27B (RAB27B) (Homo sapiens (Human)).